The sequence spans 338 residues: Large ribosomal subunit protein uL3 (338 aa).

The segment covering 228–237 (HKHRKGHRRT) has biased composition (basic residues). Residues 228–255 (HKHRKGHRRTGTIGPQAPALMFTQPRPG) form a disordered region.

It belongs to the universal ribosomal protein uL3 family. In terms of assembly, part of the 50S ribosomal subunit. Forms a cluster with proteins L14 and L24e.

Functionally, one of the primary rRNA binding proteins, it binds directly near the 3'-end of the 23S rRNA, where it nucleates assembly of the 50S subunit. The protein is Large ribosomal subunit protein uL3 of Pyrobaculum calidifontis (strain DSM 21063 / JCM 11548 / VA1).